Reading from the N-terminus, the 429-residue chain is Protein phosphatase 2C homolog 2 (429 aa).

Residues 16–291 (LYGLSAMQGW…DNMTMIIIGL (276 aa)) form the PPM-type phosphatase domain. Positions 64, 65, 233, and 282 each coordinate Mn(2+). Disordered stretches follow at residues 320–348 (YGKSEFRGPGIRNQFEETPDNYDLENDRS) and 384–429 (RDVT…SASS). Over residues 384–397 (RDVTNHLQHDKAEE) the composition is skewed to basic and acidic residues. The segment covering 405 to 419 (SESPSSANKNSSGSG) has biased composition (low complexity).

This sequence belongs to the PP2C family. Requires Mg(2+) as cofactor. Mn(2+) is required as a cofactor.

It is found in the cytoplasm. The protein resides in the nucleus. The enzyme catalyses O-phospho-L-seryl-[protein] + H2O = L-seryl-[protein] + phosphate. It carries out the reaction O-phospho-L-threonyl-[protein] + H2O = L-threonyl-[protein] + phosphate. Functionally, dephosphorylating regulator for many key proteins. Dephosphorylates sakA, to negatively regulate the stress-activated p38MAPK cascade. The chain is Protein phosphatase 2C homolog 2 from Aspergillus fumigatus (strain ATCC MYA-4609 / CBS 101355 / FGSC A1100 / Af293) (Neosartorya fumigata).